A 304-amino-acid polypeptide reads, in one-letter code: Acetyl-coenzyme A carboxylase carboxyl transferase subunit beta (304 aa).

A CoA carboxyltransferase N-terminal domain is found at 25-294 (VWTKCDSCGQ…PSVVESKADT (270 aa)). Positions 29, 32, 48, and 51 each coordinate Zn(2+). The segment at 29-51 (CDSCGQVLYRAELERNLEVCPKC) adopts a C4-type zinc-finger fold.

This sequence belongs to the AccD/PCCB family. In terms of assembly, acetyl-CoA carboxylase is a heterohexamer composed of biotin carboxyl carrier protein (AccB), biotin carboxylase (AccC) and two subunits each of ACCase subunit alpha (AccA) and ACCase subunit beta (AccD). It depends on Zn(2+) as a cofactor.

The protein localises to the cytoplasm. It carries out the reaction N(6)-carboxybiotinyl-L-lysyl-[protein] + acetyl-CoA = N(6)-biotinyl-L-lysyl-[protein] + malonyl-CoA. It functions in the pathway lipid metabolism; malonyl-CoA biosynthesis; malonyl-CoA from acetyl-CoA: step 1/1. Its function is as follows. Component of the acetyl coenzyme A carboxylase (ACC) complex. Biotin carboxylase (BC) catalyzes the carboxylation of biotin on its carrier protein (BCCP) and then the CO(2) group is transferred by the transcarboxylase to acetyl-CoA to form malonyl-CoA. This Yersinia pestis (strain Pestoides F) protein is Acetyl-coenzyme A carboxylase carboxyl transferase subunit beta.